Here is a 396-residue protein sequence, read N- to C-terminus: Elongation factor Tu (396 aa).

The tr-type G domain occupies 10-206 (KPHVNVGTIG…AMDEYIPTPE (197 aa)). A G1 region spans residues 19–26 (GHVDHGKT). GTP is bound at residue 19 to 26 (GHVDHGKT). Thr-26 contacts Mg(2+). The interval 60-64 (GITIA) is G2. A G3 region spans residues 81–84 (DCPG). GTP is bound by residues 81-85 (DCPGH) and 136-139 (NKAD). The G4 stretch occupies residues 136 to 139 (NKAD). Residues 174 to 176 (SAL) are G5.

It belongs to the TRAFAC class translation factor GTPase superfamily. Classic translation factor GTPase family. EF-Tu/EF-1A subfamily. As to quaternary structure, monomer.

The protein resides in the cytoplasm. The enzyme catalyses GTP + H2O = GDP + phosphate + H(+). In terms of biological role, GTP hydrolase that promotes the GTP-dependent binding of aminoacyl-tRNA to the A-site of ribosomes during protein biosynthesis. This Alkalilimnicola ehrlichii (strain ATCC BAA-1101 / DSM 17681 / MLHE-1) protein is Elongation factor Tu.